Reading from the N-terminus, the 647-residue chain is Denticleless protein homolog (647 aa).

7 WD repeats span residues 48-88 (AAAV…KQSS), 95-134 (AHDNAVFDIAWVPGTNCLVTASGDQTARLWDVITGDLLGT), 137-177 (GHQC…KDGF), 209-248 (DSQQGVTVVLFCDETKLISSGAVDGIIKMWDLRRNYTAYH), 264-303 (TRKLGYSGLSLDYTGSRLFSNCTDDNIYMFNISGLKTTPV), 308-349 (GHSN…QAPM), and 353-393 (GHSQ…EGEN). 2 consecutive short sequence motifs (DDB1-binding motif) follow at residues 167–170 (WDTR) and 238–241 (WDLR). 2 disordered regions span residues 410-487 (QSPN…SKSP) and 534-647 (KRSR…RTQD). Composition is skewed to polar residues over residues 426-443 (PSKNPGSVRSVSLASPQP) and 471-486 (KMPSSLQQWISRSSKS). Positions 543 to 558 (LKKEDSFGLESEKRLG) are enriched in basic and acidic residues. Positions 586-600 (KGSAQPKSPSSGSSQ) are enriched in low complexity.

The protein belongs to the WD repeat cdt2 family. Component of the DCX(DTL) E3 ubiquitin ligase complex, at least composed of cul4 (cul4a or cul4b), ddb1, dtl/cdt2 and rbx1.

It localises to the nucleus. Its subcellular location is the cytoplasm. The protein resides in the cytoskeleton. The protein localises to the microtubule organizing center. It is found in the centrosome. It localises to the chromosome. It functions in the pathway protein modification; protein ubiquitination. Its function is as follows. Substrate-specific adapter of a DCX (DDB1-CUL4-X-box) E3 ubiquitin-protein ligase complex required for cell cycle control, DNA damage response and translesion DNA synthesis. The DCX(DTL) complex, also named CRL4(CDT2) complex, mediates the polyubiquitination and subsequent degradation of CDT1, CDKN1A/p21(CIP1), KMT5A and SDE2. CDT1 degradation in response to DNA damage is necessary to ensure proper cell cycle regulation of DNA replication. CDKN1A/p21(CIP1) degradation during S phase or following UV irradiation is essential to control replication licensing. KMT5A degradation is also important for a proper regulation of mechanisms such as TGF-beta signaling, cell cycle progression, DNA repair and cell migration. Most substrates require their interaction with PCNA for their polyubiquitination: substrates interact with PCNA via their PIP-box, and those containing the 'K+4' motif in the PIP box, recruit the DCX(DTL) complex, leading to their degradation. In undamaged proliferating cells, the DCX(DTL) complex also promotes the 'Lys-164' monoubiquitination of PCNA, thereby being involved in PCNA-dependent translesion DNA synthesis. May play a role in the regulation of the circadian clock. The sequence is that of Denticleless protein homolog (dtl) from Danio rerio (Zebrafish).